A 68-amino-acid chain; its full sequence is Protein P34 (68 aa).

Transmembrane regions (helical) follow at residues 4–24 (FVGP…LAVL) and 41–61 (GFSS…GFAM).

It is found in the virion membrane. The polypeptide is Protein P34 (XXXIV) (Acinetobacter calcoaceticus (Arthrobacter siderocapsulatus)).